The primary structure comprises 434 residues: Histidinol dehydrogenase (434 aa).

NAD(+) is bound by residues Y130, Q188, and N211. Substrate contacts are provided by S237, Q259, and H262. Zn(2+)-binding residues include Q259 and H262. Active-site proton acceptor residues include E326 and H327. Substrate is bound by residues H327, D360, E414, and H419. Residue D360 participates in Zn(2+) binding. Zn(2+) is bound at residue H419.

This sequence belongs to the histidinol dehydrogenase family. In terms of assembly, homodimer. It depends on Zn(2+) as a cofactor.

The enzyme catalyses L-histidinol + 2 NAD(+) + H2O = L-histidine + 2 NADH + 3 H(+). The protein operates within amino-acid biosynthesis; L-histidine biosynthesis; L-histidine from 5-phospho-alpha-D-ribose 1-diphosphate: step 9/9. Its function is as follows. Catalyzes the sequential NAD-dependent oxidations of L-histidinol to L-histidinaldehyde and then to L-histidine. This Shigella boydii serotype 4 (strain Sb227) protein is Histidinol dehydrogenase.